The sequence spans 68 residues: Conotoxin TsMMSK-021 (68 aa).

The first 20 residues, 1–20 (MMSKLGVLLTICLLLFPLTA), serve as a signal peptide directing secretion. Positions 21–52 (VRLDGDQHTDRPADRMQDIATEQHPLFDPVKR) are excised as a propeptide. 3 cysteine pairs are disulfide-bonded: cysteine 53–cysteine 66, cysteine 54–cysteine 62, and cysteine 58–cysteine 65. Proline 64 is subject to 4-hydroxyproline.

This sequence belongs to the conotoxin M superfamily. In terms of tissue distribution, expressed by the venom duct.

Its subcellular location is the secreted. The polypeptide is Conotoxin TsMMSK-021 (Conus tessulatus (Tessellate cone)).